Here is a 346-residue protein sequence, read N- to C-terminus: MSTPTTPLSYKDAGVDIDAGNALVNNIKSAVKRTRRPEVMGNLGGFGALCELPTKYKHPVLVSGTDGVGTKLRLAIDFKKHDNVGIDLVAMCSNDLIVSGAEPLFFLDYYATGKLDVEVATAVVKGIAEGCVQSGCALIGGETAEMPGMYEGDDYDLAGFCVGVVEKEEIIDGTKVQDGDALIALASSGPHSNGFSLIRKVLEVSKADPELELAGKPLIDHLLEPTKIYVKSLLKLLEQHDVHAMSHITGGGFWENIPRVLPEDCKAVVNSDSWQWPVVFNWLMENGNISEFEMYRTFNCGVGMVIALPADKVDSALALLKTEGENAWLIGNIAKRNGEEEQVEIL.

Belongs to the AIR synthase family.

It localises to the cytoplasm. The catalysed reaction is 2-formamido-N(1)-(5-O-phospho-beta-D-ribosyl)acetamidine + ATP = 5-amino-1-(5-phospho-beta-D-ribosyl)imidazole + ADP + phosphate + H(+). It participates in purine metabolism; IMP biosynthesis via de novo pathway; 5-amino-1-(5-phospho-D-ribosyl)imidazole from N(2)-formyl-N(1)-(5-phospho-D-ribosyl)glycinamide: step 2/2. The polypeptide is Phosphoribosylformylglycinamidine cyclo-ligase (Shewanella halifaxensis (strain HAW-EB4)).